The primary structure comprises 326 residues: UPF0324 membrane protein PBPRB0970 (326 aa).

10 helical membrane passes run 27–49 (FFII…ILGF), 70–89 (LLAY…QAIA), 94–116 (GFGL…TKAL), 123–145 (GHLI…APAI), 155–177 (ALAT…GHLL), 184–206 (FGTW…GAYG), 216–235 (IKLA…ALLF), 242–261 (IGIP…AHFV), 271–290 (IFVA…GSGI), and 303–325 (LLLG…LLNV).

The protein belongs to the UPF0324 family.

The protein localises to the cell membrane. The sequence is that of UPF0324 membrane protein PBPRB0970 from Photobacterium profundum (strain SS9).